Consider the following 397-residue polypeptide: Na(+)/H(+) antiporter NhaA 2 (397 aa).

Transmembrane regions (helical) follow at residues 9–29, 59–79, 95–115, 125–145, 154–174, 177–197, 222–242, 260–280, 292–312, 332–352, and 371–391; these read LHNPAASGILIFLAAVAAMAV, LLLWINDGLMAVFFLLVGLEL, ILPVVGAVGGIALPAAIYTLI, GWAIPTATDIAFALGILALLG, LFLLTLAIIDDLAAILIIAFF, SELSPASLMIAGSAIGTLILM, SGVHATLAGVVLGFVIPLKGE, VVGLGILPLFAFANAGVSLQG, LGIALGLFLGKQIGVFGFVWL, GVALLCGVGFTMSLFISSLAF, and LGILTGSILSGIFGYILLRFS.

It belongs to the NhaA Na(+)/H(+) (TC 2.A.33) antiporter family.

It is found in the cell inner membrane. It catalyses the reaction Na(+)(in) + 2 H(+)(out) = Na(+)(out) + 2 H(+)(in). Its function is as follows. Na(+)/H(+) antiporter that extrudes sodium in exchange for external protons. The sequence is that of Na(+)/H(+) antiporter NhaA 2 from Magnetococcus marinus (strain ATCC BAA-1437 / JCM 17883 / MC-1).